Consider the following 282-residue polypeptide: Bis(5'-nucleosyl)-tetraphosphatase, symmetrical (282 aa).

It belongs to the Ap4A hydrolase family.

It carries out the reaction P(1),P(4)-bis(5'-adenosyl) tetraphosphate + H2O = 2 ADP + 2 H(+). Its function is as follows. Hydrolyzes diadenosine 5',5'''-P1,P4-tetraphosphate to yield ADP. The protein is Bis(5'-nucleosyl)-tetraphosphatase, symmetrical of Sodalis glossinidius (strain morsitans).